We begin with the raw amino-acid sequence, 257 residues long: MLDKIKHIILVLSGKGGVGKSTVSTQLALTLAESGHKVGLLDIDLCGPSVPFLLGLEGHDVHQCEQGWVPVFSGADQRLAVMSIGFLLKNRDEAVIWRGPKKTAMIKQFLEDVAWDELDYLVIDTPPGTSDEHITVMECLKGVNADGAIIVTTPQEMALEDVRKEVTFCKKTGIAILGIVENMSGFVCPNCAECTKIFSSGGGVALAELAQVPHLGTLPIDPRVGALAGTGKACVTELPDCTTSLVLKSIAKSIGAE.

14–21 (GKGGVGKS) provides a ligand contact to ATP. [4Fe-4S] cluster is bound by residues C188 and C191.

Belongs to the Mrp/NBP35 ATP-binding proteins family. NUBP2/CFD1 subfamily. As to quaternary structure, heterotetramer of 2 NUBP1 and 2 NUBP2 chains. [4Fe-4S] cluster is required as a cofactor.

The protein resides in the cytoplasm. Functionally, component of the cytosolic iron-sulfur (Fe/S) protein assembly (CIA) machinery. Required for maturation of extramitochondrial Fe-S proteins. The NUBP1-NUBP2 heterotetramer forms a Fe-S scaffold complex, mediating the de novo assembly of an Fe-S cluster and its transfer to target apoproteins. This is Cytosolic Fe-S cluster assembly factor NUBP2 homolog from Culex quinquefasciatus (Southern house mosquito).